Reading from the N-terminus, the 641-residue chain is XK-related protein 6 (641 aa).

Disordered stretches follow at residues 20–47 (LDEAVGSGGEEDGEPGGGGCGGGGDGSE) and 84–120 (RSAAADGGDQPLQPPAAPGAGRQPPTPSAARPEPPPP). The span at 34-46 (PGGGGCGGGGDGS) shows a compositional bias: gly residues. The segment covering 107–120 (PPTPSAARPEPPPP) has biased composition (pro residues). The next 7 membrane-spanning stretches (helical) occupy residues 130 to 150 (LWIVLALLVFFGDVGTDLWLA), 159 to 179 (YVYFGLTLFFVLVPSLLVQSL), 318 to 338 (TLPCVSSVTSLMSLAWVLASY), 372 to 392 (VISFALFASIFQLYFGIFVVV), 413 to 433 (WEEILFNMVVGIVYIFCWFNV), 442 to 462 (MFAYYTIVLTENAALTFLWYF), and 473 to 493 (AVPALCCVFISFVAGIAMMLL).

The protein belongs to the XK family.

The protein localises to the cell membrane. The chain is XK-related protein 6 from Homo sapiens (Human).